A 76-amino-acid chain; its full sequence is Acyl carrier protein (76 aa).

The Carrier domain occupies Met1–Thr75. O-(pantetheine 4'-phosphoryl)serine is present on Ser35.

This sequence belongs to the acyl carrier protein (ACP) family. In terms of processing, 4'-phosphopantetheine is transferred from CoA to a specific serine of apo-ACP by AcpS. This modification is essential for activity because fatty acids are bound in thioester linkage to the sulfhydryl of the prosthetic group.

The protein resides in the cytoplasm. It functions in the pathway lipid metabolism; fatty acid biosynthesis. Its function is as follows. Carrier of the growing fatty acid chain in fatty acid biosynthesis. The protein is Acyl carrier protein of Aster yellows witches'-broom phytoplasma (strain AYWB).